Consider the following 64-residue polypeptide: Phylloxin-B1 (64 aa).

The first 22 residues, 1-22, serve as a signal peptide directing secretion; it reads MVFLKKSLLLVLFVGLVSLSIC. A propeptide spanning residues 23–42 is cleaved from the precursor; sequence EENKREEHEEIEENKEKAEE. A Glutamine amide modification is found at Gln63.

As to expression, expressed by the skin glands.

It localises to the secreted. Functionally, antimicrobial peptide against the wall-less bacteria A.laidlawii and S.melliferum, the Gram-positive bacteria B.megaterium KM, C.glutamicum ATCC 27853 and M.luteus ATCC 27853 and the Gram-negative-bacteria R.meliloti 102F34 and E.coli K12. This chain is Phylloxin-B1, found in Phyllomedusa bicolor (Two-colored leaf frog).